Reading from the N-terminus, the 213-residue chain is Orotate phosphoribosyltransferase (213 aa).

Lys-26 contributes to the 5-phospho-alpha-D-ribose 1-diphosphate binding site. 34-35 contributes to the orotate binding site; it reads FF. 5-phospho-alpha-D-ribose 1-diphosphate is bound by residues 72 to 73, Arg-99, Lys-100, Lys-103, His-105, and 124 to 132; these read YK and DDVITAGTA. The orotate site is built by Thr-128 and Arg-156.

It belongs to the purine/pyrimidine phosphoribosyltransferase family. PyrE subfamily. As to quaternary structure, homodimer. It depends on Mg(2+) as a cofactor.

It carries out the reaction orotidine 5'-phosphate + diphosphate = orotate + 5-phospho-alpha-D-ribose 1-diphosphate. It participates in pyrimidine metabolism; UMP biosynthesis via de novo pathway; UMP from orotate: step 1/2. Functionally, catalyzes the transfer of a ribosyl phosphate group from 5-phosphoribose 1-diphosphate to orotate, leading to the formation of orotidine monophosphate (OMP). In Vibrio parahaemolyticus serotype O3:K6 (strain RIMD 2210633), this protein is Orotate phosphoribosyltransferase.